Reading from the N-terminus, the 142-residue chain is Transmembrane protein 170A (142 aa).

Over 1–48 (MEGGGGGLGGEPGLLQQILSLRLVPRVGNVTDCQRATLCSFPEMWYGV) the chain is Lumenal. Residue Asn-29 is glycosylated (N-linked (GlcNAc...) asparagine). Residues 49–69 (FLWALVSSLFFHIPAGLLALF) form a helical membrane-spanning segment. At 70–78 (TLRHHKYGR) the chain is on the cytoplasmic side. Residues 79–99 (FMSVGIFLMGVLGPISAGILT) traverse the membrane as a helical segment. Topologically, residues 100–114 (SAAIAGVYKAAGKEM) are lumenal. A helical transmembrane segment spans residues 115-135 (IPFEALVLGVGQTFCVLIVSF). The Cytoplasmic segment spans residues 136-142 (LRILATL).

The protein belongs to the TMEM170 family.

The protein resides in the endoplasmic reticulum membrane. Its subcellular location is the nucleus envelope. In terms of biological role, may regulate membrane morphogenesis in the endoplasmic reticulum (ER) by promoting ER sheet formation at the expense of ER tubules. The sequence is that of Transmembrane protein 170A (tmem170a) from Xenopus laevis (African clawed frog).